The sequence spans 345 residues: Phosphoribosylformylglycinamidine cyclo-ligase (345 aa).

The protein belongs to the AIR synthase family.

It localises to the cytoplasm. It catalyses the reaction 2-formamido-N(1)-(5-O-phospho-beta-D-ribosyl)acetamidine + ATP = 5-amino-1-(5-phospho-beta-D-ribosyl)imidazole + ADP + phosphate + H(+). Its pathway is purine metabolism; IMP biosynthesis via de novo pathway; 5-amino-1-(5-phospho-D-ribosyl)imidazole from N(2)-formyl-N(1)-(5-phospho-D-ribosyl)glycinamide: step 2/2. This Shewanella putrefaciens (strain CN-32 / ATCC BAA-453) protein is Phosphoribosylformylglycinamidine cyclo-ligase.